Reading from the N-terminus, the 471-residue chain is COP9 signalosome complex subunit 1 (471 aa).

Residues 249–411 (CFLLASFDHC…KILYARDVDQ (163 aa)) form the PCI domain. Residues 445-471 (HVKSPPREGSQGELTPANSQSRMSTNM) are disordered. Residues S448 and S454 each carry the phosphoserine modification. Residues 456 to 471 (GELTPANSQSRMSTNM) show a composition bias toward polar residues. Phosphothreonine is present on T459. S463 is subject to Phosphoserine.

Belongs to the CSN1 family. As to quaternary structure, component of the CSN complex, composed of COPS1/GPS1, COPS2, COPS3, COPS4, COPS5, COPS6, COPS7 (COPS7A or COPS7B), COPS8 and COPS9. In the complex, it probably interacts directly with COPS2, COPS3, COPS4 and COPS5. Interacts directly with inositol kinase ITPK1. Interacts with CAPN8. Interacts with USP48. Interacts with ASB4; this interaction negatively regulates GPS1. Expressed in the base region of the oxyntic and pyloric mucosae.

The protein resides in the cytoplasm. It localises to the nucleus. Essential component of the COP9 signalosome complex (CSN), a complex involved in various cellular and developmental processes. The CSN complex is an essential regulator of the ubiquitin (Ubl) conjugation pathway by mediating the deneddylation of the cullin subunits of SCF-type E3 ligase complexes, leading to decrease the Ubl ligase activity of SCF-type complexes such as SCF, CSA or DDB2. The complex is also involved in phosphorylation of p53/TP53, c-jun/JUN, IkappaBalpha/NFKBIA, ITPK1 and IRF8/ICSBP, possibly via its association with CK2 and PKD kinases. CSN-dependent phosphorylation of TP53 and JUN promotes and protects degradation by the Ubl system, respectively. Suppresses G-protein- and mitogen-activated protein kinase-mediated signal transduction. The polypeptide is COP9 signalosome complex subunit 1 (Gps1) (Mus musculus (Mouse)).